We begin with the raw amino-acid sequence, 466 residues long: Neuraminidase (466 aa).

Topologically, residues 1-11 are intravirion; sequence MLPSTIQTLTL. The chain crosses the membrane as a helical span at residues 12–34; it reads FLTSGGVLLSLYVSASLSYLLYS. An involved in apical transport and lipid raft association region spans residues 13-35; it reads LTSGGVLLSLYVSASLSYLLYSD. The Virion surface portion of the chain corresponds to 35 to 466; that stretch reads DILLKFSPTK…DTVTGVDMAL (432 aa). The segment at 38–86 is hypervariable stalk region; sequence LKFSPTKRTAPTMSLECVNVSNAQAVNHSATKEMTFLLPEPEWTYPRLS. Residues Asn-56 and Asn-64 are each glycosylated (N-linked (GlcNAc...) asparagine; by host). 8 disulfides stabilise this stretch: Cys-87/Cys-420, Cys-122/Cys-127, Cys-182/Cys-229, Cys-231/Cys-236, Cys-277/Cys-291, Cys-279/Cys-289, Cys-318/Cys-337, and Cys-424/Cys-447. The tract at residues 89 to 466 is head of neuraminidase; the sequence is GSTFQKALLI…DTVTGVDMAL (378 aa). Arg-116 is a binding site for substrate. A glycan (N-linked (GlcNAc...) asparagine; by host) is linked at Asn-144. The active-site Proton donor/acceptor is the Asp-149. Arg-150 contributes to the substrate binding site. 275 to 276 provides a ligand contact to substrate; the sequence is EE. A glycan (N-linked (GlcNAc...) asparagine; by host) is linked at Asn-284. Arg-292 is a binding site for substrate. 2 residues coordinate Ca(2+): Asp-293 and Asp-324. Arg-374 contributes to the substrate binding site. Residue Tyr-409 is the Nucleophile of the active site.

The protein belongs to the glycosyl hydrolase 34 family. In terms of assembly, homotetramer. The cofactor is Ca(2+). In terms of processing, N-glycosylated.

The protein resides in the virion membrane. The protein localises to the host apical cell membrane. The enzyme catalyses Hydrolysis of alpha-(2-&gt;3)-, alpha-(2-&gt;6)-, alpha-(2-&gt;8)- glycosidic linkages of terminal sialic acid residues in oligosaccharides, glycoproteins, glycolipids, colominic acid and synthetic substrates.. Its activity is regulated as follows. Inhibited by the neuraminidase inhibitors zanamivir (Relenza) and oseltamivir (Tamiflu). These drugs interfere with the release of progeny virus from infected cells and are effective against all influenza strains. Resistance to neuraminidase inhibitors is quite rare. Its function is as follows. Catalyzes the removal of terminal sialic acid residues from viral and cellular glycoconjugates. Cleaves off the terminal sialic acids on the glycosylated HA during virus budding to facilitate virus release. Additionally helps virus spread through the circulation by further removing sialic acids from the cell surface. These cleavages prevent self-aggregation and ensure the efficient spread of the progeny virus from cell to cell. Otherwise, infection would be limited to one round of replication. Described as a receptor-destroying enzyme because it cleaves a terminal sialic acid from the cellular receptors. May facilitate viral invasion of the upper airways by cleaving the sialic acid moieties on the mucin of the airway epithelial cells. Likely to plays a role in the budding process through its association with lipid rafts during intracellular transport. May additionally display a raft-association independent effect on budding. Plays a role in the determination of host range restriction on replication and virulence. Sialidase activity in late endosome/lysosome traffic seems to enhance virus replication. The polypeptide is Neuraminidase (Influenza B virus (strain B/Maryland/1959)).